Consider the following 507-residue polypeptide: Putative thymidine phosphorylase (507 aa).

The protein belongs to the thymidine/pyrimidine-nucleoside phosphorylase family. Type 2 subfamily.

It carries out the reaction thymidine + phosphate = 2-deoxy-alpha-D-ribose 1-phosphate + thymine. The sequence is that of Putative thymidine phosphorylase from Ralstonia nicotianae (strain ATCC BAA-1114 / GMI1000) (Ralstonia solanacearum).